A 517-amino-acid chain; its full sequence is Carotenoid phi-ring synthase (517 aa).

The tract at residues M1–P24 is disordered. FAD-binding positions include A45, E64–R65, R72, Y99, D461, and M472.

Belongs to the carotenoid/retinoid oxidoreductase family. FAD serves as cofactor.

It catalyses the reaction a carotenoid beta-end derivative + 2 A = a carotenoid phi-end derivative + 2 AH2. It participates in carotenoid biosynthesis. Its function is as follows. Involved in the biosynthesis of isorenieratene, a carotenoid with aromatic end groups. Catalyzes the introduction of two additional double bonds into each ionone ring of beta-carotene to produce isorenieratene. The reaction includes an intramolecular methyl transfer from position C1 to position C2 of the ring. This chain is Carotenoid phi-ring synthase, found in Streptomyces griseus.